A 1097-amino-acid chain; its full sequence is U3 small nucleolar RNA-associated protein 22 (1097 aa).

Composition is skewed to basic and acidic residues over residues 1–10 (MNGLKREHES) and 18–27 (KTPETEYDSH). The disordered stretch occupies residues 1-27 (MNGLKREHESSSSQDGSKTPETEYDSH).

It belongs to the NRAP family. In terms of assembly, component of the ribosomal small subunit (SSU) processome.

The protein localises to the nucleus. It is found in the nucleolus. Functionally, involved in nucleolar processing of pre-18S ribosomal RNA and ribosome assembly. The sequence is that of U3 small nucleolar RNA-associated protein 22 from Schizosaccharomyces pombe (strain 972 / ATCC 24843) (Fission yeast).